A 61-amino-acid polypeptide reads, in one-letter code: DNA gyrase inhibitor YacG (61 aa).

The Zn(2+) site is built by C14, C17, C29, and C33.

It belongs to the DNA gyrase inhibitor YacG family. As to quaternary structure, interacts with GyrB. The cofactor is Zn(2+).

Functionally, inhibits all the catalytic activities of DNA gyrase by preventing its interaction with DNA. Acts by binding directly to the C-terminal domain of GyrB, which probably disrupts DNA binding by the gyrase. This Zymomonas mobilis subsp. mobilis (strain ATCC 31821 / ZM4 / CP4) protein is DNA gyrase inhibitor YacG.